We begin with the raw amino-acid sequence, 405 residues long: Nicotinate phosphoribosyltransferase (405 aa).

A Phosphohistidine; by autocatalysis modification is found at H230.

This sequence belongs to the NAPRTase family. In terms of processing, transiently phosphorylated on a His residue during the reaction cycle. Phosphorylation strongly increases the affinity for substrates and increases the rate of nicotinate D-ribonucleotide production. Dephosphorylation regenerates the low-affinity form of the enzyme, leading to product release.

It catalyses the reaction nicotinate + 5-phospho-alpha-D-ribose 1-diphosphate + ATP + H2O = nicotinate beta-D-ribonucleotide + ADP + phosphate + diphosphate. The protein operates within cofactor biosynthesis; NAD(+) biosynthesis; nicotinate D-ribonucleotide from nicotinate: step 1/1. Its function is as follows. Catalyzes the synthesis of beta-nicotinate D-ribonucleotide from nicotinate and 5-phospho-D-ribose 1-phosphate at the expense of ATP. This chain is Nicotinate phosphoribosyltransferase, found in Bordetella pertussis (strain Tohama I / ATCC BAA-589 / NCTC 13251).